The chain runs to 339 residues: Dehydrogenase/reductase SDR family member 7 (339 aa).

Positions M1–A28 are cleaved as a signal peptide. Residues S60 and I62 each contribute to the NAD(+) site. A substrate-binding site is contributed by S190. NAD(+)-binding residues include Y203, K207, and S239. Y203 functions as the Proton acceptor in the catalytic mechanism.

It belongs to the short-chain dehydrogenases/reductases (SDR) family. In terms of tissue distribution, found predominantly in the adrenal glands, liver, thyroid, prostate, small intestine, colon, stomach, kidney and brain. Lower levels observed in skeletal muscle, the lung and the spleen.

The protein localises to the endoplasmic reticulum membrane. It carries out the reaction all-trans-retinol + NADP(+) = all-trans-retinal + NADPH + H(+). It catalyses the reaction 5alpha-androstane-3alpha,17beta-diol + NADP(+) = 17beta-hydroxy-5alpha-androstan-3-one + NADPH + H(+). NADPH-dependent oxidoreductase which catalyzes the reduction of a variety of compounds bearing carbonyl groups including steroids, retinoids and xenobiotics. Catalyzes the reduction/inactivation of 5alpha-dihydrotestosterone to 3alpha-androstanediol, with a possible role in the modulation of androgen receptor function. Involved in the reduction of all-trans-retinal to all-trans-retinol. Converts cortisone to 20beta-dihydrocortisone in vitro, although the physiological relevance of this activity is questionable. Reduces exogenous compounds such as quinones (1,2-naphtoquinone, 9,10-phenantrenequinone and benzoquinone) and other xenobiotics (alpha-diketones) in vitro, suggesting a role in the biotransformation of xenobiotics with carbonyl group. A dehydrogenase activity has not been detected so far. May play a role as tumor suppressor. This is Dehydrogenase/reductase SDR family member 7 from Homo sapiens (Human).